Here is a 435-residue protein sequence, read N- to C-terminus: Monodehydroascorbate reductase 4, cytosolic (435 aa).

FAD-binding positions include 14-17, E41, R48, K53, I96, and 147-148; these read GGVA and RD. NAD(+) is bound by residues 172–178, E196, R202, and G261; that span reads GGYIGLE. 174–178 lines the NADP(+) pocket; the sequence is YIGLE. The NADP(+) site is built by R202 and G261. D298 contributes to the FAD binding site. 314-315 provides a ligand contact to NAD(+); the sequence is EH. 314-315 contacts NADP(+); it reads EH. V316 is a binding site for FAD. R320 is a binding site for L-ascorbate. Y349 is a binding site for FAD. Y349 is an NAD(+) binding site. Y349 lines the NADP(+) pocket. An L-ascorbate-binding site is contributed by R351.

This sequence belongs to the FAD-dependent oxidoreductase family. The cofactor is FAD. As to expression, expressed in anthers.

It is found in the cytoplasm. The catalysed reaction is 2 monodehydro-L-ascorbate radical + NADH + H(+) = 2 L-ascorbate + NAD(+). Catalyzes the conversion of monodehydroascorbate to ascorbate, oxidizing NADH in the process. Ascorbate is a major antioxidant against reactive oxygen species (ROS) and nitric oxide (NO). The chain is Monodehydroascorbate reductase 4, cytosolic from Oryza sativa subsp. japonica (Rice).